Here is a 172-residue protein sequence, read N- to C-terminus: Shikimate kinase (172 aa).

14–19 (GAGKST) is an ATP binding site. Ser18 lines the Mg(2+) pocket. The substrate site is built by Asp36, Arg60, and Gly82. Residue Arg120 coordinates ATP. Arg140 is a substrate binding site. Gln157 contributes to the ATP binding site.

It belongs to the shikimate kinase family. As to quaternary structure, monomer. Mg(2+) is required as a cofactor.

The protein resides in the cytoplasm. It carries out the reaction shikimate + ATP = 3-phosphoshikimate + ADP + H(+). It functions in the pathway metabolic intermediate biosynthesis; chorismate biosynthesis; chorismate from D-erythrose 4-phosphate and phosphoenolpyruvate: step 5/7. In terms of biological role, catalyzes the specific phosphorylation of the 3-hydroxyl group of shikimic acid using ATP as a cosubstrate. The polypeptide is Shikimate kinase (Pseudoalteromonas translucida (strain TAC 125)).